A 180-amino-acid chain; its full sequence is Large ribosomal subunit protein uL5 (180 aa).

It belongs to the universal ribosomal protein uL5 family. In terms of assembly, part of the 50S ribosomal subunit; part of the 5S rRNA/L5/L18/L25 subcomplex. Contacts the 5S rRNA and the P site tRNA. Forms a bridge to the 30S subunit in the 70S ribosome.

In terms of biological role, this is one of the proteins that bind and probably mediate the attachment of the 5S RNA into the large ribosomal subunit, where it forms part of the central protuberance. In the 70S ribosome it contacts protein S13 of the 30S subunit (bridge B1b), connecting the 2 subunits; this bridge is implicated in subunit movement. Contacts the P site tRNA; the 5S rRNA and some of its associated proteins might help stabilize positioning of ribosome-bound tRNAs. The sequence is that of Large ribosomal subunit protein uL5 from Chlamydia pneumoniae (Chlamydophila pneumoniae).